Here is a 314-residue protein sequence, read N- to C-terminus: Porphobilinogen deaminase (314 aa).

C243 bears the S-(dipyrrolylmethanemethyl)cysteine mark.

Belongs to the HMBS family. Monomer. Dipyrromethane serves as cofactor.

The enzyme catalyses 4 porphobilinogen + H2O = hydroxymethylbilane + 4 NH4(+). It participates in porphyrin-containing compound metabolism; protoporphyrin-IX biosynthesis; coproporphyrinogen-III from 5-aminolevulinate: step 2/4. Tetrapolymerization of the monopyrrole PBG into the hydroxymethylbilane pre-uroporphyrinogen in several discrete steps. The chain is Porphobilinogen deaminase from Bordetella bronchiseptica (strain ATCC BAA-588 / NCTC 13252 / RB50) (Alcaligenes bronchisepticus).